The following is a 25-amino-acid chain: Ribosome-inactivating protein velutin (25 aa).

Residues 1–25 are disordered; it reads XHPDLFXXRPDNTASPKFEDPRLNP.

It belongs to the ribosome-inactivating protein family.

It carries out the reaction Endohydrolysis of the N-glycosidic bond at one specific adenosine on the 28S rRNA.. Functionally, inhibits protein synthesis but does not possess ribonuclease activity. Also inhibits HIV-1 reverse transcriptase, beta-glucosidase and beta-glucuronidase. The polypeptide is Ribosome-inactivating protein velutin (Flammulina velutipes (Agaricus velutipes)).